The following is a 158-amino-acid chain: MSLFEGKKVIIIGDRDGIPGPAIEKCIEGTGAEVVFSSTECFVUTAAGAMDLENQKRVKTLTEKHGAENILVILGAAEGEAAGLAAETVTNGDPTFAGPLSNVQLGLRVYHAVEPEFKEEVNEEVYEEEIGMMEMVLEVDEIIEEMTDIRTEFCKFLD.

The active site involves Sec44. Sec44 is a non-standard amino acid (selenocysteine).

Belongs to the GrdA family. In terms of assembly, monomer. Component of the glycine, sarcosine and betaine reductase complexes, together with components B and C.

The catalysed reaction is acetyl phosphate + [thioredoxin]-disulfide + NH4(+) + H2O = [thioredoxin]-dithiol + glycine + phosphate + H(+). It carries out the reaction acetyl phosphate + methylamine + [thioredoxin]-disulfide + H2O = sarcosine + [thioredoxin]-dithiol + phosphate + H(+). The enzyme catalyses acetyl phosphate + trimethylamine + [thioredoxin]-disulfide + H2O = glycine betaine + [thioredoxin]-dithiol + phosphate + H(+). In the first step of glycine, betaine and sarcosine reductases, the substrate is bound to component PB via a Schiff base intermediate. Then the PB-activated substrate is nucleophilically attacked by the selenol anion of component PA to transform it to a carboxymethylated selenoether and the respective amine. By action of component PC, acetyl phosphate is formed, leaving component PA in its oxidized state. Finally component PA becomes reduced by the thioredoxin system to start a new catalytic cycle of reductive deamination. This is Glycine/sarcosine/betaine reductase complex component A from Clostridium botulinum (strain ATCC 19397 / Type A).